We begin with the raw amino-acid sequence, 145 residues long: D-aminoacyl-tRNA deacylase (145 aa).

Residues 137 to 138 carry the Gly-cisPro motif, important for rejection of L-amino acids motif; sequence GP.

Belongs to the DTD family. As to quaternary structure, homodimer.

The protein localises to the cytoplasm. It catalyses the reaction glycyl-tRNA(Ala) + H2O = tRNA(Ala) + glycine + H(+). The enzyme catalyses a D-aminoacyl-tRNA + H2O = a tRNA + a D-alpha-amino acid + H(+). In terms of biological role, an aminoacyl-tRNA editing enzyme that deacylates mischarged D-aminoacyl-tRNAs. Also deacylates mischarged glycyl-tRNA(Ala), protecting cells against glycine mischarging by AlaRS. Acts via tRNA-based rather than protein-based catalysis; rejects L-amino acids rather than detecting D-amino acids in the active site. By recycling D-aminoacyl-tRNA to D-amino acids and free tRNA molecules, this enzyme counteracts the toxicity associated with the formation of D-aminoacyl-tRNA entities in vivo and helps enforce protein L-homochirality. The chain is D-aminoacyl-tRNA deacylase from Carboxydothermus hydrogenoformans (strain ATCC BAA-161 / DSM 6008 / Z-2901).